Reading from the N-terminus, the 351-residue chain is Dihydroorotate dehydrogenase (quinone) (351 aa).

FMN is bound by residues 61 to 65 (AGLDK) and Thr85. Lys65 is a substrate binding site. 110-114 (NRMGF) provides a ligand contact to substrate. The FMN site is built by Asn139 and Asn172. Asn172 is a binding site for substrate. Catalysis depends on Ser175, which acts as the Nucleophile. Asn177 is a substrate binding site. The FMN site is built by Lys217 and Thr245. 246–247 (NT) is a binding site for substrate. FMN contacts are provided by residues Gly268, Gly297, and 318-319 (YT).

This sequence belongs to the dihydroorotate dehydrogenase family. Type 2 subfamily. In terms of assembly, monomer. FMN serves as cofactor.

It is found in the cell membrane. It catalyses the reaction (S)-dihydroorotate + a quinone = orotate + a quinol. The protein operates within pyrimidine metabolism; UMP biosynthesis via de novo pathway; orotate from (S)-dihydroorotate (quinone route): step 1/1. Its function is as follows. Catalyzes the conversion of dihydroorotate to orotate with quinone as electron acceptor. This is Dihydroorotate dehydrogenase (quinone) from Xylella fastidiosa (strain M12).